The following is a 330-amino-acid chain: Probable aldo-keto reductase 6 (330 aa).

Y64 serves as the catalytic Proton donor. Substrate is bound at residue H132. 211 to 221 (SPLGRGFLGLP) is a binding site for NADP(+).

The protein belongs to the aldo/keto reductase family.

This chain is Probable aldo-keto reductase 6, found in Arabidopsis thaliana (Mouse-ear cress).